The chain runs to 235 residues: MKDELFKQNPKKQFEFDKSVASVFDDMINRSVPFYRENLELCGNLLAKILPTNASICDLGCSSANFLIFLANLRKDFKLFGVDNSASMLEVAKSKAKAYGLDISFFEANLCEFDFFICDVFVANYTMQFIRPPKRQELLDKIYKNLNSKGILIMSEKILYEDAFLSKNIIELYADYKEKQGYSKFEIAAKREALENVLIPYSQKENLNMLEKAGFKKIESIFKWANFETFIAFKD.

S-adenosyl-L-methionine contacts are provided by residues Tyr-35, 60 to 62 (GCS), 83 to 84 (DN), Asn-124, and Arg-191.

Belongs to the class I-like SAM-binding methyltransferase superfamily. Cx-SAM synthase family. In terms of assembly, homodimer.

It carries out the reaction prephenate + S-adenosyl-L-methionine = carboxy-S-adenosyl-L-methionine + 3-phenylpyruvate + H2O. In terms of biological role, catalyzes the conversion of S-adenosyl-L-methionine (SAM) to carboxy-S-adenosyl-L-methionine (Cx-SAM). This Campylobacter jejuni subsp. doylei (strain ATCC BAA-1458 / RM4099 / 269.97) protein is Carboxy-S-adenosyl-L-methionine synthase.